Consider the following 514-residue polypeptide: Serine/threonine protein phosphatase PstP (514 aa).

The Cytoplasmic portion of the chain corresponds to 1-302; the sequence is MARVTLVLRY…RPRWSGRRLA (302 aa). The region spanning 9-238 is the PPM-type phosphatase domain; that stretch reads RYAARSDRGL…DNVTVVVADV (230 aa). Mn(2+) is bound by residues Asp-38, Gly-39, Asp-118, Ser-160, Asp-191, and Asp-229. Residues 303–323 traverse the membrane as a helical segment; it reads FVVALVTVLMTAGLLIGRAII. Residues 324-514 lie on the Extracellular side of the membrane; that stretch reads RSNYYVADYA…QPGIDCRAAA (191 aa). The disordered stretch occupies residues 420-514; that stretch reads LLPPCPAPRA…QPGIDCRAAA (95 aa). Over residues 440–480 the composition is skewed to low complexity; sequence TTSETTEPNVTSSPASPSPTTSASAPTGTTPAIPTSASPAA.

It depends on Mn(2+) as a cofactor.

The protein resides in the cell membrane. It catalyses the reaction O-phospho-L-seryl-[protein] + H2O = L-seryl-[protein] + phosphate. It carries out the reaction O-phospho-L-threonyl-[protein] + H2O = L-threonyl-[protein] + phosphate. Plays an important role in regulating cell division and growth by reversible phosphorylation signaling. May play important roles in regulating cellular metabolism and signaling pathways, which could mediate the growth and development of the cell. Plays a role in establishing and maintaining infection. The polypeptide is Serine/threonine protein phosphatase PstP (pstP) (Mycobacterium tuberculosis (strain CDC 1551 / Oshkosh)).